Reading from the N-terminus, the 366-residue chain is Cytochrome c peroxidase, mitochondrial (366 aa).

Residues 1–46 constitute a mitochondrion transit peptide; sequence MASAARSASRAFLRSTPTTSSFRPAVRAARFALPAQGFRAAGRRGY. Histidine 127 (proton acceptor) is an active-site residue. Histidine 250 is a heme b binding site. The active-site Tryptophan radical intermediate is the tryptophan 266.

This sequence belongs to the peroxidase family. Cytochrome c peroxidase subfamily. As to quaternary structure, forms a one-to-one complex with cytochrome c. Heme b is required as a cofactor.

The protein localises to the mitochondrion matrix. It is found in the mitochondrion intermembrane space. It catalyses the reaction 2 Fe(II)-[cytochrome c] + H2O2 + 2 H(+) = 2 Fe(III)-[cytochrome c] + 2 H2O. In terms of biological role, destroys radicals which are normally produced within the cells and which are toxic to biological systems. In Aspergillus fumigatus (strain ATCC MYA-4609 / CBS 101355 / FGSC A1100 / Af293) (Neosartorya fumigata), this protein is Cytochrome c peroxidase, mitochondrial (ccp1).